A 210-amino-acid chain; its full sequence is Guanylate kinase (210 aa).

The 181-residue stretch at 6-186 folds into the Guanylate kinase-like domain; it reads GVILVLSSPS…TADRISNILR (181 aa). Position 13 to 20 (13 to 20) interacts with ATP; that stretch reads SPSGCGKT.

This sequence belongs to the guanylate kinase family.

The protein resides in the cytoplasm. It carries out the reaction GMP + ATP = GDP + ADP. In terms of biological role, essential for recycling GMP and indirectly, cGMP. The protein is Guanylate kinase of Anaplasma phagocytophilum (strain HZ).